Reading from the N-terminus, the 5147-residue chain is Cadherin-related tumor suppressor (5147 aa).

The signal sequence occupies residues 1–35 (MERLLLLFFLLLAGRESLCQTGDTKLELLAPRGRS). Cadherin domains are found at residues 36–156 (YATT…SPEF), 157–270 (PEPS…PPIF), 271–382 (DHSD…DPII), 383–494 (SFRF…EPVF), 495–599 (EKSE…APQF), 600–708 (SQRE…DPQF), 709–820 (YPRH…LEML), 821–942 (ECGQ…APVF), 943–1049 (ALDR…TPVF), 1050–1153 (DHTS…APQF), 1154–1278 (TNST…APEF), 1279–1384 (LRAP…APEF), 1385–1489 (TQSS…PPIF), 1490–1601 (PSTA…APVF), 1602–1713 (VSMN…VPQF), 1714–1823 (EQRS…PPQF), 1824–1922 (LDTP…PPLF), 1923–2027 (EDTV…APIF), 2028–2167 (DPMS…VPVF), 2168–2278 (ISAN…SPVF), 2279–2385 (DPKQ…PTFL), 2386–2491 (DSPY…DPVF), 2492–2596 (ELQS…IPKF), 2597–2703 (DSTT…FPTF), 2704–2810 (AYMA…APVM), 2811–2913 (EQLI…PPKF), 2914–3013 (TRLF…APEF), 3014–3124 (EHSF…PPKF), 3125–3229 (EQAE…TPRF), 3230–3334 (SVNS…PPVF), 3335–3439 (NHKE…YPQF), 3440–3545 (LQPV…PPEF), 3546–3651 (IKHY…GPTF), and 3652–3756 (TPEG…NPST). At 36–4583 (YATTYEQYAA…GQDAAQVADP (4548 aa)) the chain is on the extracellular side. N-linked (GlcNAc...) asparagine glycosylation is found at N239, N257, N276, N280, N402, and N461. N605 and N631 each carry an N-linked (GlcNAc...) asparagine glycan. N-linked (GlcNAc...) asparagine glycosylation is found at N1155, N1367, and N1458. N-linked (GlcNAc...) asparagine glycosylation is found at N1751, N1831, and N1880. N-linked (GlcNAc...) asparagine glycosylation is found at N2080, N2171, N2247, N2290, N2437, and N2581. An N-linked (GlcNAc...) asparagine glycan is attached at N2799. 3 N-linked (GlcNAc...) asparagine glycosylation sites follow: N2920, N2946, and N2967. N-linked (GlcNAc...) asparagine glycosylation is found at N3167, N3303, N3386, N3389, and N3525. N-linked (GlcNAc...) asparagine glycans are attached at residues N3852, N3865, and N3905. 4 consecutive EGF-like domains span residues 3950–4011 (GYEP…EQCS), 4013–4049 (RQDPCLPNPCHSQVQCRRLGSDFQCMCPANRDGKHCE), 4052–4090 (RSDVCYSKPCRNGGSCQRSPDGSSYFCLCRPGFRGNQCE), and 4092–4128 (VSDSCRPNPCLHGGLCVSLKPGYKCNCTPGRYGRHCE). 16 disulfides stabilise this stretch: C3954/C3966, C3960/C3999, C4001/C4010, C4017/C4028, C4022/C4037, C4039/C4048, C4056/C4067, C4061/C4078, C4080/C4089, C4096/C4107, C4101/C4116, C4118/C4127, C4294/C4320, C4325/C4341, C4334/C4350, and C4352/C4361. A Laminin G-like 1 domain is found at 4129 to 4320 (RFSYGFQPLS…LQQKGILAGC (192 aa)). N-linked (GlcNAc...) asparagine glycosylation occurs at N4306. One can recognise an EGF-like 5 domain in the interval 4321–4362 (NRQACQPALAAERCGGFAGQCIDRWSSSLCQCGGHLQSPDCS). One can recognise a Laminin G-like 2 domain in the interval 4402–4569 (DNQQMRERRA…RYHGKIESGC (168 aa)). N-linked (GlcNAc...) asparagine glycosylation is found at N4414, N4471, N4487, N4539, and N4550. A disulfide bridge connects residues C4536 and C4569. A helical transmembrane segment spans residues 4584-4609 (LSIGFTLVIVFFVILVVAILGSYVIY). Topologically, residues 4610-5147 (RFRGKQEKIG…NGPAAPEEYV (538 aa)) are cytoplasmic. An essential for stability of mitochondrial electron chain complexes I and V, and promotes interaction with ND-24 region spans residues 4744-4771 (PEHYDLENASSIAPSDIDIVYHYKGYRE). Disordered stretches follow at residues 4787-4850 (AYTH…SQQP), 4871-4921 (TSSS…QTSM), and 4967-5041 (GDVD…PIPP). The span at 4826–4835 (SASRTHQSTP) shows a compositional bias: polar residues. Composition is skewed to low complexity over residues 4838 to 4850 (RLSPSSELSSQQP) and 4891 to 4918 (SPVMSQLSGQSSSASRQKPGVPQQQAQQ). S4843 carries the post-translational modification Phosphoserine. Polar residues predominate over residues 4972-5008 (HSSTSTDESGNDSFTCSEIEYDNNSLSGDGKYSTSKS). Phosphoserine occurs at positions 5054 and 5061. The tract at residues 5113–5147 (PDTNGPSQQQQQQTQVVSTLRMPSSNGPAAPEEYV) is disordered. The span at 5119 to 5131 (SQQQQQQTQVVST) shows a compositional bias: low complexity.

As to quaternary structure, interacts with Fbxl7. Ft-mito interacts with NADH dehydrogenase subunit ND-24 and with ATP synthase subunit ATPsynC. In terms of processing, phosphorylated by fj on Ser/Thr of cadherin domains. Phosphorylation by fj enhances binding to ds. Phosphorylated in the cytoplasmic domain in a dco-dependent manner which is promoted by ds. Post-translationally, proteolytically cleaved to yield stably associated N- and C-terminal fragments. The C-terminal fragment is processed further to release a 68 kDa mitochondrial fragment, Ft-mito.

The protein localises to the cell membrane. It is found in the apical cell membrane. It localises to the mitochondrion. Functionally, involved in regulation of planar cell polarity in the compound eye where it is required for correct specification of the R3 and R4 photoreceptor cells by regulating Fz activity in the R3/R4 precursor cells. This is likely to occur through creation of an ft gradient so that the equatorial R3/R4 precursor cell has a higher level of ft function than its polar neighbor. Also required for planar cell polarity of wing hairs. Mediates heterophilic cell adhesion in vitro and is required to stabilize ds on the cell surface. Involved in regulation of eye imaginal disk size. Upstream component of the Hippo pathway where it is likely to act as a cell surface receptor involved in regulation of tissue size and is required for the localization and stability of ex. Probably acts as a cell surface receptor for ds. Its function is as follows. Regulates mitochondrial electron transport chain integrity and promotes oxidative phosphorylation. The sequence is that of Cadherin-related tumor suppressor from Drosophila melanogaster (Fruit fly).